A 527-amino-acid polypeptide reads, in one-letter code: Peptide chain release factor 3 (527 aa).

The tr-type G domain occupies 11-278 (AKRRTFAIIS…GFVEWAPPPL (268 aa)). GTP is bound by residues 20–27 (SHPDAGKT), 87–91 (DTPGH), and 141–144 (NKMD).

This sequence belongs to the TRAFAC class translation factor GTPase superfamily. Classic translation factor GTPase family. PrfC subfamily.

Its subcellular location is the cytoplasm. In terms of biological role, increases the formation of ribosomal termination complexes and stimulates activities of RF-1 and RF-2. It binds guanine nucleotides and has strong preference for UGA stop codons. It may interact directly with the ribosome. The stimulation of RF-1 and RF-2 is significantly reduced by GTP and GDP, but not by GMP. In Saccharophagus degradans (strain 2-40 / ATCC 43961 / DSM 17024), this protein is Peptide chain release factor 3.